Consider the following 223-residue polypeptide: Cytidylate kinase (223 aa).

12–20 (GPAGSGKST) provides a ligand contact to ATP.

It belongs to the cytidylate kinase family. Type 1 subfamily.

The protein resides in the cytoplasm. The enzyme catalyses CMP + ATP = CDP + ADP. It carries out the reaction dCMP + ATP = dCDP + ADP. The polypeptide is Cytidylate kinase (Aster yellows witches'-broom phytoplasma (strain AYWB)).